Reading from the N-terminus, the 296-residue chain is GTPase Era (296 aa).

One can recognise an Era-type G domain in the interval 7–174 (KAGYISIVGR…TEVIRHYLPE (168 aa)). A G1 region spans residues 15-22 (GRPNVGKS). Position 15 to 22 (15 to 22 (GRPNVGKS)) interacts with GTP. The segment at 41–45 (QTTRH) is G2. The interval 62 to 65 (DTPG) is G3. GTP is bound by residues 62 to 66 (DTPGF) and 123 to 126 (NKID). A G4 region spans residues 123 to 126 (NKID). A G5 region spans residues 153-155 (VSA). One can recognise a KH type-2 domain in the interval 205–281 (IGEEVPYSVS…YLEIWVKVKS (77 aa)).

It belongs to the TRAFAC class TrmE-Era-EngA-EngB-Septin-like GTPase superfamily. Era GTPase family. Monomer.

The protein localises to the cytoplasm. It is found in the cell inner membrane. Its function is as follows. An essential GTPase that binds both GDP and GTP, with rapid nucleotide exchange. Plays a role in 16S rRNA processing and 30S ribosomal subunit biogenesis and possibly also in cell cycle regulation and energy metabolism. The sequence is that of GTPase Era from Nitrosomonas eutropha (strain DSM 101675 / C91 / Nm57).